The sequence spans 269 residues: Imidazole glycerol phosphate synthase subunit HisF (269 aa).

Residues Asp23 and Asp142 contribute to the active site.

The protein belongs to the HisA/HisF family. In terms of assembly, heterodimer of HisH and HisF.

It is found in the cytoplasm. It catalyses the reaction 5-[(5-phospho-1-deoxy-D-ribulos-1-ylimino)methylamino]-1-(5-phospho-beta-D-ribosyl)imidazole-4-carboxamide + L-glutamine = D-erythro-1-(imidazol-4-yl)glycerol 3-phosphate + 5-amino-1-(5-phospho-beta-D-ribosyl)imidazole-4-carboxamide + L-glutamate + H(+). The protein operates within amino-acid biosynthesis; L-histidine biosynthesis; L-histidine from 5-phospho-alpha-D-ribose 1-diphosphate: step 5/9. IGPS catalyzes the conversion of PRFAR and glutamine to IGP, AICAR and glutamate. The HisF subunit catalyzes the cyclization activity that produces IGP and AICAR from PRFAR using the ammonia provided by the HisH subunit. In Bordetella parapertussis (strain 12822 / ATCC BAA-587 / NCTC 13253), this protein is Imidazole glycerol phosphate synthase subunit HisF.